Reading from the N-terminus, the 93-residue chain is Neurophysin 1 (93 aa).

7 disulfides stabilise this stretch: Cys10–Cys54, Cys13–Cys27, Cys21–Cys44, Cys28–Cys34, Cys61–Cys74, Cys68–Cys86, and Cys75–Cys80.

Belongs to the vasopressin/oxytocin family.

Its subcellular location is the secreted. Its function is as follows. Neurophysin 1 specifically binds oxytocin. The polypeptide is Neurophysin 1 (Anser anser anser (Western greylag goose)).